The following is a 468-amino-acid chain: Acetyl-CoA decarbonylase/synthase complex subunit gamma 2 (468 aa).

The 4Fe-4S domain maps to 1–60; that stretch reads MKINSPLEAYKYLPQTNCGECGEATCMAFASKLIDRSGKPTQCPPLVKEKKFAKKLAELE. [4Fe-4S] cluster is bound by residues Cys18, Cys21, Cys26, and Cys43.

As to quaternary structure, heterodimer of delta and gamma chains. The ACDS complex is made up of alpha, epsilon, beta, gamma and delta chains with a probable stoichiometry of (alpha(2)epsilon(2))(4)-beta(8)-(gamma(1)delta(1))(8). Corrinoid is required as a cofactor. [4Fe-4S] cluster serves as cofactor.

The enzyme catalyses 5,6,7,8-tetrahydrosarcinapterin + methyl-Co(III)-[corrinoid Fe-S protein] = 5-methyltetrahydrosarcinapterin + Co(I)-[corrinoid Fe-S protein] + H(+). The protein operates within one-carbon metabolism; methanogenesis from acetate. In terms of biological role, part of a complex that catalyzes the reversible cleavage of acetyl-CoA, allowing growth on acetate as sole source of carbon and energy. In Methanosarcina thermophila, this protein is Acetyl-CoA decarbonylase/synthase complex subunit gamma 2.